Consider the following 498-residue polypeptide: Glycerol kinase (498 aa).

Thr-12 is a binding site for ADP. Residues Thr-12, Thr-13, and Ser-14 each coordinate ATP. Residue Thr-12 participates in sn-glycerol 3-phosphate binding. Arg-16 contacts ADP. Residues Arg-82, Glu-83, Tyr-134, and Asp-244 each contribute to the sn-glycerol 3-phosphate site. Arg-82, Glu-83, Tyr-134, Asp-244, and Gln-245 together coordinate glycerol. Residues Thr-266 and Gly-310 each coordinate ADP. Residues Thr-266, Gly-310, Gln-314, and Gly-411 each contribute to the ATP site. ADP-binding residues include Gly-411 and Asn-415.

The protein belongs to the FGGY kinase family.

It catalyses the reaction glycerol + ATP = sn-glycerol 3-phosphate + ADP + H(+). The protein operates within polyol metabolism; glycerol degradation via glycerol kinase pathway; sn-glycerol 3-phosphate from glycerol: step 1/1. With respect to regulation, inhibited by fructose 1,6-bisphosphate (FBP). In terms of biological role, key enzyme in the regulation of glycerol uptake and metabolism. Catalyzes the phosphorylation of glycerol to yield sn-glycerol 3-phosphate. In Chloroflexus aggregans (strain MD-66 / DSM 9485), this protein is Glycerol kinase.